A 245-amino-acid chain; its full sequence is Glucan endo-1,3-beta-glucosidase (245 aa).

The N-terminal stretch at 1-23 is a signal peptide; that stretch reads MMKTLVVVLSLSLTILSFGGAHA. 8 disulfide bridges follow: Cys-32–Cys-244, Cys-80–Cys-90, Cys-95–Cys-102, Cys-150–Cys-233, Cys-155–Cys-216, Cys-163–Cys-179, Cys-183–Cys-192, and Cys-193–Cys-203.

This sequence belongs to the thaumatin family. In terms of tissue distribution, abundantly expressed in ripening fruit.

The protein resides in the secreted. It catalyses the reaction Hydrolysis of (1-&gt;3)-beta-D-glucosidic linkages in (1-&gt;3)-beta-D-glucans.. This chain is Glucan endo-1,3-beta-glucosidase, found in Prunus avium (Cherry).